The primary structure comprises 201 residues: MRTFTWRKGSLSKVNTCYVLAGGKSKRFGEDKLLYEIKGKKVIERVYETAKSVFKEVYIVAKDREKFSFLNAPVVLDEFEESASIIGLYTALKHAKEENVFVLSGDLPLMKKETVLYVLENFKEPVSVAKTEKLHTLVGVYSKKLLEKIEERIKKGDYRIWALLKDVGYNEVEIPEELRYTLLNMNTKEDLKRILAIENHY.

GTP is bound by residues 20–22, Lys32, Asp77, and Asp106; that span reads LAG. Asp106 contributes to the Mg(2+) binding site.

Belongs to the MobA family. Requires Mg(2+) as cofactor.

It localises to the cytoplasm. It carries out the reaction Mo-molybdopterin + GTP + H(+) = Mo-molybdopterin guanine dinucleotide + diphosphate. Functionally, transfers a GMP moiety from GTP to Mo-molybdopterin (Mo-MPT) cofactor (Moco or molybdenum cofactor) to form Mo-molybdopterin guanine dinucleotide (Mo-MGD) cofactor. This chain is Probable molybdenum cofactor guanylyltransferase, found in Aquifex aeolicus (strain VF5).